The chain runs to 514 residues: 1-pyrroline-5-carboxylate dehydrogenase (514 aa).

Residues Glu286 and Cys320 contribute to the active site.

It belongs to the aldehyde dehydrogenase family. RocA subfamily.

It catalyses the reaction L-glutamate 5-semialdehyde + NAD(+) + H2O = L-glutamate + NADH + 2 H(+). The protein operates within amino-acid degradation; L-proline degradation into L-glutamate; L-glutamate from L-proline: step 2/2. In Staphylococcus saprophyticus subsp. saprophyticus (strain ATCC 15305 / DSM 20229 / NCIMB 8711 / NCTC 7292 / S-41), this protein is 1-pyrroline-5-carboxylate dehydrogenase.